The following is a 261-amino-acid chain: Cytochrome c oxidase subunit 3 (261 aa).

The Mitochondrial matrix portion of the chain corresponds to 1–15; it reads MAHQAHSYHMVDPSP. The helical transmembrane segment at 16 to 34 threads the bilayer; that stretch reads WPIFGATAALLTTSGLIMW. Topologically, residues 35–40 are mitochondrial intermembrane; the sequence is FHYNSL. The chain crosses the membrane as a helical span at residues 41-66; the sequence is YLLTLGLLSMFLVMIQWWRDIVREST. At 67–72 the chain is on the mitochondrial matrix side; the sequence is FQGHHT. Residues 73-105 form a helical membrane-spanning segment; it reads PTVQKGLRYGMILFITSEAFFFLGFFWAFFHSS. The Mitochondrial intermembrane segment spans residues 106 to 128; the sequence is LAPTPELGAQWPPTGINPLNPLE. The chain crosses the membrane as a helical span at residues 129 to 152; sequence VPLLNTAILLASGVTVTWAHHSIT. Residues 153–155 are Mitochondrial matrix-facing; that stretch reads ESN. A helical membrane pass occupies residues 156-183; the sequence is RKQAIHALSLTIILGFYFTALQAMEYHE. The Mitochondrial intermembrane segment spans residues 184–190; sequence ASFSIAD. The helical transmembrane segment at 191–223 threads the bilayer; it reads GVYGSTFFVATGFHGLHVIIGSSFLTVCLLRLI. Residues 224–232 lie on the Mitochondrial matrix side of the membrane; sequence KFHFTTNHH. The chain crosses the membrane as a helical span at residues 233–256; sequence FGFEAAAWYWHFVDVIWLFLYMSI. At 257–261 the chain is on the mitochondrial intermembrane side; the sequence is YWWGS.

It belongs to the cytochrome c oxidase subunit 3 family. Component of the cytochrome c oxidase (complex IV, CIV), a multisubunit enzyme composed of 14 subunits. The complex is composed of a catalytic core of 3 subunits MT-CO1, MT-CO2 and MT-CO3, encoded in the mitochondrial DNA, and 11 supernumerary subunits COX4I, COX5A, COX5B, COX6A, COX6B, COX6C, COX7A, COX7B, COX7C, COX8 and NDUFA4, which are encoded in the nuclear genome. The complex exists as a monomer or a dimer and forms supercomplexes (SCs) in the inner mitochondrial membrane with NADH-ubiquinone oxidoreductase (complex I, CI) and ubiquinol-cytochrome c oxidoreductase (cytochrome b-c1 complex, complex III, CIII), resulting in different assemblies (supercomplex SCI(1)III(2)IV(1) and megacomplex MCI(2)III(2)IV(2)).

The protein localises to the mitochondrion inner membrane. The catalysed reaction is 4 Fe(II)-[cytochrome c] + O2 + 8 H(+)(in) = 4 Fe(III)-[cytochrome c] + 2 H2O + 4 H(+)(out). In terms of biological role, component of the cytochrome c oxidase, the last enzyme in the mitochondrial electron transport chain which drives oxidative phosphorylation. The respiratory chain contains 3 multisubunit complexes succinate dehydrogenase (complex II, CII), ubiquinol-cytochrome c oxidoreductase (cytochrome b-c1 complex, complex III, CIII) and cytochrome c oxidase (complex IV, CIV), that cooperate to transfer electrons derived from NADH and succinate to molecular oxygen, creating an electrochemical gradient over the inner membrane that drives transmembrane transport and the ATP synthase. Cytochrome c oxidase is the component of the respiratory chain that catalyzes the reduction of oxygen to water. Electrons originating from reduced cytochrome c in the intermembrane space (IMS) are transferred via the dinuclear copper A center (CU(A)) of subunit 2 and heme A of subunit 1 to the active site in subunit 1, a binuclear center (BNC) formed by heme A3 and copper B (CU(B)). The BNC reduces molecular oxygen to 2 water molecules using 4 electrons from cytochrome c in the IMS and 4 protons from the mitochondrial matrix. The chain is Cytochrome c oxidase subunit 3 (MT-CO3) from Struthio camelus (Common ostrich).